A 156-amino-acid polypeptide reads, in one-letter code: Small ribosomal subunit protein uS7 (156 aa).

The protein belongs to the universal ribosomal protein uS7 family. Part of the 30S ribosomal subunit. Contacts proteins S9 and S11.

Functionally, one of the primary rRNA binding proteins, it binds directly to 16S rRNA where it nucleates assembly of the head domain of the 30S subunit. Is located at the subunit interface close to the decoding center, probably blocks exit of the E-site tRNA. This Polynucleobacter necessarius subsp. necessarius (strain STIR1) protein is Small ribosomal subunit protein uS7.